The following is a 402-amino-acid chain: Imidazolonepropionase (402 aa).

Residues His66 and His68 each contribute to the Fe(3+) site. His66 and His68 together coordinate Zn(2+). 3 residues coordinate 4-imidazolone-5-propanoate: Arg75, Tyr138, and His171. N-formimidoyl-L-glutamate is bound at residue Tyr138. His236 is a Fe(3+) binding site. His236 is a binding site for Zn(2+). 4-imidazolone-5-propanoate is bound at residue Gln239. A Fe(3+)-binding site is contributed by Asp311. Asp311 lines the Zn(2+) pocket. Asn313 and Gly315 together coordinate N-formimidoyl-L-glutamate. Position 316 (Thr316) interacts with 4-imidazolone-5-propanoate.

It belongs to the metallo-dependent hydrolases superfamily. HutI family. Zn(2+) is required as a cofactor. It depends on Fe(3+) as a cofactor.

The protein localises to the cytoplasm. It catalyses the reaction 4-imidazolone-5-propanoate + H2O = N-formimidoyl-L-glutamate. It functions in the pathway amino-acid degradation; L-histidine degradation into L-glutamate; N-formimidoyl-L-glutamate from L-histidine: step 3/3. Catalyzes the hydrolytic cleavage of the carbon-nitrogen bond in imidazolone-5-propanoate to yield N-formimidoyl-L-glutamate. It is the third step in the universal histidine degradation pathway. This chain is Imidazolonepropionase, found in Pseudomonas aeruginosa (strain LESB58).